Reading from the N-terminus, the 720-residue chain is F-box/LRR-repeat MAX2 homolog (720 aa).

In terms of domain architecture, F-box spans 14–60 (SSAILDLPEPLLLHILSFLTDVRSRHRAALACGRMRAAERATRSELS). LRR repeat units lie at residues 71–134 (LFLS…QNAF), 135–158 (IAAR…DPTT), 159–189 (LANL…PDGA), 190–218 (DLEP…DVVR), 219–247 (ALTT…FKSS), 248–279 (ELGP…VGDD), 280–316 (ALLS…ITVA), 317–344 (GLVA…EAAP), 345–372 (AMEA…KASW), 373–398 (LHLD…LTDA), 399–435 (SLAA…TLRP), 436–452 (TLKE…HTAE), 453–510 (CLTA…KCRY), 511–537 (MEFD…LLSP), 538–571 (LISA…PRTI), 572–606 (FGLS…GQMD), 607–644 (LSLW…SLTL), and 645–720 (PAVG…QIDD).

Associates to a SCF (SKP1-CUL1-F-box protein) E3 ubiquitin-protein ligase complex. Interacts with D14 in a strigolactone-dependent manner. Interacts with SKP1, SKP5 and SKP20. As to expression, expressed in leaves. Expressed in roots, culms, leaf blades, leaf sheaths, shoot bases and panicles.

Its subcellular location is the nucleus. Its function is as follows. Involved in strigolactone (SL) signaling. Required for responses to SLs and the establishment of arbuscular mycorrhiza symbiosis in rice. Strigolactone-dependent association of D3 with D14 and D53 (a repressor of SL signaling) triggers D53 ubiquitination and degradation. Controls tillering by suppressing axillary bud activity. Tiller is a specialized grain-bearing branch that is formed on the unelongated basal internode and grows independently of the mother stem (culm) by means of its own adventitious roots. The sequence is that of F-box/LRR-repeat MAX2 homolog from Oryza sativa subsp. japonica (Rice).